A 228-amino-acid polypeptide reads, in one-letter code: 5'-methylthioadenosine/S-adenosylhomocysteine nucleosidase (228 aa).

The active-site Proton acceptor is the E11. Substrate is bound by residues G77, I151, and 172–173 (ME). D196 serves as the catalytic Proton donor.

The protein belongs to the PNP/UDP phosphorylase family. MtnN subfamily.

The enzyme catalyses S-adenosyl-L-homocysteine + H2O = S-(5-deoxy-D-ribos-5-yl)-L-homocysteine + adenine. It catalyses the reaction S-methyl-5'-thioadenosine + H2O = 5-(methylsulfanyl)-D-ribose + adenine. The catalysed reaction is 5'-deoxyadenosine + H2O = 5-deoxy-D-ribose + adenine. It functions in the pathway amino-acid biosynthesis; L-methionine biosynthesis via salvage pathway; S-methyl-5-thio-alpha-D-ribose 1-phosphate from S-methyl-5'-thioadenosine (hydrolase route): step 1/2. In terms of biological role, catalyzes the irreversible cleavage of the glycosidic bond in both 5'-methylthioadenosine (MTA) and S-adenosylhomocysteine (SAH/AdoHcy) to adenine and the corresponding thioribose, 5'-methylthioribose and S-ribosylhomocysteine, respectively. Also cleaves 5'-deoxyadenosine, a toxic by-product of radical S-adenosylmethionine (SAM) enzymes, into 5-deoxyribose and adenine. This is 5'-methylthioadenosine/S-adenosylhomocysteine nucleosidase from Staphylococcus epidermidis (strain ATCC 12228 / FDA PCI 1200).